The sequence spans 302 residues: Nucleotide-binding protein Bamb_2855 (302 aa).

G8–S15 contacts ATP. Residue D57–S60 coordinates GTP.

It belongs to the RapZ-like family.

In terms of biological role, displays ATPase and GTPase activities. This Burkholderia ambifaria (strain ATCC BAA-244 / DSM 16087 / CCUG 44356 / LMG 19182 / AMMD) (Burkholderia cepacia (strain AMMD)) protein is Nucleotide-binding protein Bamb_2855.